A 248-amino-acid polypeptide reads, in one-letter code: MKSYIEPFIASKALSQNSQKAYRYDLQQFCQLVGERVNQDKLLLYQNSIANLSLSAKKRKLSTANQFLYYLYQIKYLNSYFRLTDTMKVMRTEKQQAAIINTDIFYQKTPFVWGQLISLLILELGLTPSEVAGIEVANLDLNFQMLTLKTKKGVRVLPLSQILIPFLEQQLVGKEVYLFEHRGIPFSRQWFFNHLKTFVRSIGYEGLTAQKLREQFILKEKLAGKSIIELSDILGLKSPVTLEKYYKS.

The Core-binding (CB) domain maps to 1–72 (MKSYIEPFIA…TANQFLYYLY (72 aa)). Residues 85–248 (DTMKVMRTEK…PVTLEKYYKS (164 aa)) form the Tyr recombinase domain. Active-site residues include Lys149 and Arg213. Tyr245 serves as the catalytic O-(3'-phospho-DNA)-tyrosine intermediate.

It belongs to the 'phage' integrase family. XerD-like subfamily.

It is found in the cytoplasm. In terms of biological role, putative tyrosine recombinase. Not involved in the cutting and rejoining of the recombining DNA molecules on dif(SL) site. This chain is Tyrosine recombinase XerD-like, found in Streptococcus pyogenes serotype M18 (strain MGAS8232).